We begin with the raw amino-acid sequence, 612 residues long: Zinc metalloproteinase-disintegrin-like berythractivase (612 aa).

The N-terminal stretch at Met-1–Ser-20 is a signal peptide. The propeptide occupies Ile-21–Asn-187. The Peptidase M12B domain occupies Lys-200–Pro-396. Glu-203 lines the Ca(2+) pocket. Asn-260 carries N-linked (GlcNAc...) asparagine glycosylation. Ca(2+) is bound at residue Asp-287. Disulfide bonds link Cys-311–Cys-391, Cys-351–Cys-375, and Cys-353–Cys-358. His-336 contributes to the Zn(2+) binding site. Glu-337 is a catalytic residue. The Zn(2+) site is built by His-340 and His-346. A glycan (N-linked (GlcNAc...) asparagine) is linked at Asn-348. N-linked (GlcNAc...) asparagine glycosylation is present at Asn-374. The Ca(2+) site is built by Cys-391, Asn-394, Val-406, Asn-409, Leu-411, Glu-413, Glu-416, and Asp-419. A Disintegrin domain is found at Pro-404–Asn-490. Intrachain disulfides connect Cys-407–Cys-436, Cys-418–Cys-431, Cys-420–Cys-426, Cys-430–Cys-453, Cys-444–Cys-450, Cys-449–Cys-475, Cys-462–Cys-482, Cys-469–Cys-501, Cys-494–Cys-506, Cys-513–Cys-563, Cys-528–Cys-574, Cys-541–Cys-551, Cys-558–Cys-600, and Cys-594–Cys-605. An N-linked (GlcNAc...) asparagine glycan is attached at Asn-432. Residues Asp-468–Asp-470 carry the D/ECD-tripeptide motif. Ca(2+) contacts are provided by Asp-470, Leu-471, Glu-473, and Asp-485.

This sequence belongs to the venom metalloproteinase (M12B) family. P-III subfamily. P-IIIa sub-subfamily. As to quaternary structure, monomer. Zn(2+) is required as a cofactor. Post-translationally, highly glycosylated. Expressed by the venom gland.

The protein localises to the secreted. With respect to regulation, inhibited by EDTA and o-phenanthroline. Not inhibited by PMSF, benzamidine, irreversible serine-proteinase inhibitors and cysteine proteinase inhibitor E-64. Its function is as follows. Potent activator of prothrombin (F2). Does not elicit any hemorrhagic response. Barely inhibits collagen-induced platelet aggregation. Binds neither collagen, nor the jararhagin monoclonal antibody MAJar3. Hydrolyzes the Aalpha-chain of fibrin and fibrinogen, without affecting the Bbeta- and gamma-chains. Is capable of triggering endothelial pro-inflammatory and procoagulant cell responses, but fails to trigger apoptosis. Induces von Willebrand factor release, and the expression of both ICAM1 and E-selectin (SELE) (without increase in VCAM1) in endothelial cells (HUVEC). Is also able to up-regulate the synthesis of the coagulation factor TF (F3). Enhances nitric oxide (NO) generation, prostacyclin production and interleukin-8 release. The polypeptide is Zinc metalloproteinase-disintegrin-like berythractivase (Bothrops erythromelas (Caatinga lance head)).